A 427-amino-acid chain; its full sequence is Citrate synthase (427 aa).

Active-site residues include histidine 306 and aspartate 363.

It belongs to the citrate synthase family. In terms of assembly, homohexamer.

The enzyme catalyses oxaloacetate + acetyl-CoA + H2O = citrate + CoA + H(+). Its pathway is carbohydrate metabolism; tricarboxylic acid cycle; isocitrate from oxaloacetate: step 1/2. Allosterically inhibited by NADH. The polypeptide is Citrate synthase (gltA) (Salmonella typhimurium (strain LT2 / SGSC1412 / ATCC 700720)).